The primary structure comprises 544 residues: Pyruvate kinase (544 aa).

Residue Arg-31 participates in substrate binding. Residues Asn-33 and Asp-61 each contribute to the K(+) site. 33–36 (NSAH) contributes to the ATP binding site. Arg-68 provides a ligand contact to ATP. Mg(2+) is bound at residue Glu-204. Substrate-binding residues include Gly-227, Asp-228, and Thr-260. Residue Asp-228 participates in Mg(2+) binding.

Belongs to the pyruvate kinase family. As to quaternary structure, homotetramer. The cofactor is Mg(2+). It depends on K(+) as a cofactor.

The enzyme catalyses pyruvate + ATP = phosphoenolpyruvate + ADP + H(+). It functions in the pathway carbohydrate degradation; glycolysis; pyruvate from D-glyceraldehyde 3-phosphate: step 5/5. The protein is Pyruvate kinase of Thermoplasma acidophilum (strain ATCC 25905 / DSM 1728 / JCM 9062 / NBRC 15155 / AMRC-C165).